The sequence spans 359 residues: 3-dehydroquinate synthase (359 aa).

Residues 106-110 (GVVGD), 130-131 (TS), lysine 143, and lysine 152 each bind NAD(+). The Zn(2+) site is built by glutamate 185, histidine 246, and histidine 263.

Belongs to the sugar phosphate cyclases superfamily. Dehydroquinate synthase family. Co(2+) is required as a cofactor. The cofactor is Zn(2+). NAD(+) serves as cofactor.

It is found in the cytoplasm. The catalysed reaction is 7-phospho-2-dehydro-3-deoxy-D-arabino-heptonate = 3-dehydroquinate + phosphate. It participates in metabolic intermediate biosynthesis; chorismate biosynthesis; chorismate from D-erythrose 4-phosphate and phosphoenolpyruvate: step 2/7. Functionally, catalyzes the conversion of 3-deoxy-D-arabino-heptulosonate 7-phosphate (DAHP) to dehydroquinate (DHQ). The sequence is that of 3-dehydroquinate synthase from Clostridium kluyveri (strain ATCC 8527 / DSM 555 / NBRC 12016 / NCIMB 10680 / K1).